The sequence spans 317 residues: Glutathione synthetase (317 aa).

The ATP-grasp domain maps to 125–311 (EKMFATLFPQ…IGGKLMDAID (187 aa)). 152–208 (TAKHADVILKPLDGMGGTSIFRHRAGDPNLSVILETLTALGTQQIMAQAYLPAIKDG) contributes to the ATP binding site. Mg(2+) is bound by residues Glu-282 and Asn-284.

It belongs to the prokaryotic GSH synthase family. Mg(2+) serves as cofactor. It depends on Mn(2+) as a cofactor.

The enzyme catalyses gamma-L-glutamyl-L-cysteine + glycine + ATP = glutathione + ADP + phosphate + H(+). The protein operates within sulfur metabolism; glutathione biosynthesis; glutathione from L-cysteine and L-glutamate: step 2/2. The protein is Glutathione synthetase of Pseudomonas putida (strain ATCC 47054 / DSM 6125 / CFBP 8728 / NCIMB 11950 / KT2440).